The sequence spans 367 residues: PR domain zinc finger protein 12 (367 aa).

The SET domain maps to 86–203; the sequence is AEVIIAQSSI…PDQELLVWYG (118 aa). 3 C2H2-type zinc fingers span residues 243 to 265, 271 to 293, and 299 to 323; these read MRCVICHRGFNSRSNLRSHMRIH, FVCRFCNRRFSQSSTLRNHVRLH, and YKCQVCQSAYSQLAGLRAHQKSARH. The disordered stretch occupies residues 318–337; the sequence is QKSARHRPPSTALQAHSPAL.

This sequence belongs to the class V-like SAM-binding methyltransferase superfamily. Interacts with EHMT2. As to expression, not found in adult tissues except in dorsal root ganglia.

It is found in the nucleus. In terms of biological role, transcriptional regulator necessary for the development of nociceptive neurons, playing a key role in determining the nociceptive lineage from neural crest cell progenitors. Initiates neurogenesis and activates downstream pro-neuronal transcription factors, such as NEUROD1, BRN3A, and ISL1, specifically within nociceptive neurons, while repressing non-nociceptor cell fates. Essential for the proper function of nociceptors in adults, influencing both their excitability and their gene expression, thereby impacting how these neurons respond to various pain stimuli. The protein is PR domain zinc finger protein 12 (PRDM12) of Homo sapiens (Human).